The sequence spans 243 residues: HTH-type transcriptional regulator MlrA (243 aa).

The HTH merR-type domain maps to leucine 3–asparagine 72. A DNA-binding region (H-T-H motif) is located at residues isoleucine 6–arginine 25.

As to quaternary structure, interacts with DgcM and PdeR.

With respect to regulation, activity is regulated by DgcM and PdeR. Activates transcription of csgD, the master regulator of biofilm formation, by binding to its promoter region. Also controls the transcription of cadC and ibaG. Part of a signaling cascade that regulates curli biosynthesis. The cascade is composed of two c-di-GMP control modules, in which c-di-GMP controlled by the DgcE/PdeH pair (module I) regulates the activity of the DgcM/PdeR pair (module II), which in turn regulates activity of the transcription factor MlrA. In Escherichia coli (strain K12), this protein is HTH-type transcriptional regulator MlrA.